The primary structure comprises 299 residues: Nitrogenase iron protein (299 aa).

ATP is bound at residue 11 to 18; the sequence is GKGGIGKS. Cysteine 99 contributes to the [4Fe-4S] cluster binding site. The residue at position 102 (arginine 102) is an ADP-ribosylarginine; by dinitrogenase reductase ADP-ribosyltransferase. Cysteine 133 provides a ligand contact to [4Fe-4S] cluster.

It belongs to the NifH/BchL/ChlL family. Homodimer. It depends on [4Fe-4S] cluster as a cofactor. In terms of processing, the reversible ADP-ribosylation of Arg-102 inactivates the nitrogenase reductase and regulates nitrogenase activity.

The catalysed reaction is N2 + 8 reduced [2Fe-2S]-[ferredoxin] + 16 ATP + 16 H2O = H2 + 8 oxidized [2Fe-2S]-[ferredoxin] + 2 NH4(+) + 16 ADP + 16 phosphate + 6 H(+). The key enzymatic reactions in nitrogen fixation are catalyzed by the nitrogenase complex, which has 2 components: the iron protein and the molybdenum-iron protein. The protein is Nitrogenase iron protein of Rhodopseudomonas palustris (strain BisB5).